A 404-amino-acid chain; its full sequence is Cysteine desulfurase IscS (404 aa).

Pyridoxal 5'-phosphate is bound by residues 75–76, asparagine 155, glutamine 183, and 203–205; these read AT and SAH. Residue lysine 206 is modified to N6-(pyridoxal phosphate)lysine. Threonine 243 provides a ligand contact to pyridoxal 5'-phosphate. The active-site Cysteine persulfide intermediate is the cysteine 328. A [2Fe-2S] cluster-binding site is contributed by cysteine 328.

This sequence belongs to the class-V pyridoxal-phosphate-dependent aminotransferase family. NifS/IscS subfamily. In terms of assembly, homodimer. Forms a heterotetramer with IscU, interacts with other sulfur acceptors. Requires pyridoxal 5'-phosphate as cofactor.

The protein resides in the cytoplasm. The enzyme catalyses (sulfur carrier)-H + L-cysteine = (sulfur carrier)-SH + L-alanine. The protein operates within cofactor biosynthesis; iron-sulfur cluster biosynthesis. Functionally, master enzyme that delivers sulfur to a number of partners involved in Fe-S cluster assembly, tRNA modification or cofactor biosynthesis. Catalyzes the removal of elemental sulfur atoms from cysteine to produce alanine. Functions as a sulfur delivery protein for Fe-S cluster synthesis onto IscU, an Fe-S scaffold assembly protein, as well as other S acceptor proteins. This Pseudomonas syringae pv. syringae (strain B728a) protein is Cysteine desulfurase IscS.